The chain runs to 482 residues: uncharacterized protein (482 aa).

Residues 12 to 80 (LPKYRQIVHF…MGKGTVVINN (69 aa)) enclose the HTH gntR-type domain. The H-T-H motif DNA-binding region spans 40-59 (QRTLAKDFQVNRSTVITALE). Lys325 is subject to N6-(pyridoxal phosphate)lysine.

It in the C-terminal section; belongs to the class-I pyridoxal-phosphate-dependent aminotransferase family. It depends on pyridoxal 5'-phosphate as a cofactor.

This is an uncharacterized protein from Bacillus subtilis (strain 168).